The following is a 351-amino-acid chain: L-threonine 3-dehydrogenase (351 aa).

Cys39 lines the Zn(2+) pocket. Catalysis depends on charge relay system residues Thr41 and His44. His64, Glu65, Cys94, Cys97, Cys100, and Cys108 together coordinate Zn(2+). NAD(+) is bound by residues Ile176, Asp196, Arg201, 271 to 273 (LGI), and 295 to 296 (IY).

The protein belongs to the zinc-containing alcohol dehydrogenase family. In terms of assembly, homotetramer. Zn(2+) serves as cofactor.

The protein resides in the cytoplasm. It catalyses the reaction L-threonine + NAD(+) = (2S)-2-amino-3-oxobutanoate + NADH + H(+). It functions in the pathway amino-acid degradation; L-threonine degradation via oxydo-reductase pathway; glycine from L-threonine: step 1/2. Catalyzes the NAD(+)-dependent oxidation of L-threonine to 2-amino-3-ketobutyrate. The protein is L-threonine 3-dehydrogenase of Francisella tularensis subsp. mediasiatica (strain FSC147).